The sequence spans 64 residues: MAKAKDVRITISLECTGCSQGNKKYPGVFRYTTQKNRRNTPTRIELKKFCPYCYRRTICREIKK.

It belongs to the bacterial ribosomal protein bL33 family.

It is found in the plastid. It localises to the chloroplast. This Huperzia lucidula (Shining clubmoss) protein is Large ribosomal subunit protein bL33c.